The sequence spans 458 residues: GTPase Der (458 aa).

2 consecutive EngA-type G domains span residues K9 to Q171 and I197 to S368. Residues G15–S22, D62–M66, N123–D126, G203–S210, D250–I254, and N314–D317 each bind GTP. A KH-like domain is found at K369–K453.

Belongs to the TRAFAC class TrmE-Era-EngA-EngB-Septin-like GTPase superfamily. EngA (Der) GTPase family. As to quaternary structure, associates with the 50S ribosomal subunit.

In terms of biological role, GTPase that plays an essential role in the late steps of ribosome biogenesis. This chain is GTPase Der, found in Helicobacter pylori (strain ATCC 700392 / 26695) (Campylobacter pylori).